The primary structure comprises 616 residues: Auxin efflux carrier component 4 (616 aa).

The Extracellular segment spans residues 1-7 (MITWHDL). Residues 8–28 (YTVLTAVVPLYVAMILAYGSV) form a helical membrane-spanning segment. Over 29–38 (QWWKIFSPDQ) the chain is Cytoplasmic. A helical transmembrane segment spans residues 39–59 (CSGINRFVAIFAVPLLSFHFI). Val-51 contacts (indol-3-yl)acetate. At 60–70 (STNDPYAMNFR) the chain is on the extracellular side. A helical membrane pass occupies residues 71–91 (FVAADTLQKIIMLVLLALWAN). Residues 92 to 101 (LTKNGSLEWM) are Cytoplasmic-facing. A helical transmembrane segment spans residues 102-122 (ITIFSLSTLPNTLVMGIPLLI). Residues Asn-112 and Leu-114 each coordinate (indol-3-yl)acetate. Over 123-131 (AMYGTYAGS) the chain is Extracellular. Residues 132–152 (LMVQVVVLQCIIWYTLLLFLF) traverse the membrane as a helical segment. A (indol-3-yl)acetate-binding site is contributed by Tyr-145. The Cytoplasmic portion of the chain corresponds to 153-476 (EYRGAKLLIM…LIRNPNTYSS (324 aa)). A phosphoserine mark is found at Ser-223, Ser-240, and Ser-280. The tract at residues 302 to 343 (AAGSYPAPNPEFSTGTGVSTKPNKIPKENQQQLQEKDSKASH) is disordered. A compositionally biased stretch (polar residues) spans 312–334 (EFSTGTGVSTKPNKIPKENQQQL). Phosphoserine occurs at positions 358 and 395. Residues 390 to 411 (DQPRKSNARGGGDDIGGLDSGE) are disordered. Residues 398 to 409 (RGGGDDIGGLDS) show a composition bias toward gly residues. The helical transmembrane segment at 477–497 (LIGLIWALVAYRWHVAMPKIL) threads the bilayer. Over 498–500 (QQS) the chain is Extracellular. A helical membrane pass occupies residues 501-521 (ISILSDAGLGMAMFSLGLFMA). Residues 522 to 535 (LQPKIIACGNSVAT) are Cytoplasmic-facing. Residues 536-556 (FAMAVRFITGPAIMAVAGIAI) traverse the membrane as a helical segment. Over 557-561 (GLHGD) the chain is Extracellular. Residues 562 to 582 (LLRIAIVQAALPQGIVPFVFA) traverse the membrane as a helical segment. (indol-3-yl)acetate-binding residues include Ile-576 and Val-577. Residues 583–595 (KEYNVHPTILSTG) lie on the Cytoplasmic side of the membrane. A helical membrane pass occupies residues 596–616 (VIFGMLIALPITLVYYILLGL).

The protein belongs to the auxin efflux carrier (TC 2.A.69.1) family. As to quaternary structure, homodimer. As to expression, expressed in the quiescent center precursors and surrounding cells. Present in columella cells of primary roots. Detected in pollen.

It localises to the cell membrane. Acts as a component of the auxin efflux carrier. Plays a role in generating a sink for auxin into columella cells. Maintains the endogenous auxin gradient, which is essential for correct root patterning. Involved in EXO70A3-regulated gravitropic responses in columella cells and in root system architecture (RSA). Together with PIN3 and PIN7, involved in the connective auxin transport (CAT) that ensures communication across the shoot system, and modulates strigolactone-mediated shoot branching control. The abcb19 pin3 pin4 pin7 quadruple mutant exhibits an additive phenotype on strigolactone-mediated bud outgrowth responses and shoot branching control. This is Auxin efflux carrier component 4 from Arabidopsis thaliana (Mouse-ear cress).